Consider the following 468-residue polypeptide: MDLSGCRDIISSLPEAISCHILSFLPTKEAASTSVLSKKWRYLFAFVPNLDLDESVYLNPENETEVSSSFMDFVDRVLALQGNSPLHKFSLKIGDGVEPDRIIPWINNVLERGVSDLDLHVYMETEFVFPSEMFLSKTLVRLKLMLYPLLEFEDVYLPKLKTLYIDSCYFEKYGIGLTKLLSGCPILEDLVLDDIPWCTWDFASVSVPTLKRLTFSTQVRDEFPKSVSIDTPNLVYLKFTDTVAGKYPKVNFDSLVEAHIDLRLLQGHQGYGENDMVGNATDFIMRICNVKTLYLSSNTLQVLTYSCDAIPIFNNLTHLTIESNPEVGWQSLPGLLKNSPNLETLIFQGLIHKATDKCGDVCLCKPREEIRSCLASSPVKVIKILKFGEISDDMEKQREQIKYFLETMPNLEKMILYYNTTSVEDVTEVSSRLQRLVSKLASSTCIVQLISDNLSLSSTVSTNGLLCF.

One can recognise an F-box domain in the interval 7–60 (RDIISSLPEAISCHILSFLPTKEAASTSVLSKKWRYLFAFVPNLDLDESVYLNP). LRR repeat units follow at residues 114-136 (VSDLDLHVYMETEFVFPSEMFLS), 138-167 (TLVRLKLMLYPLLEFEDVYLPKLKTLYIDS), 169-194 (YFEKYGIGLTKLLSGCPILEDLVLDD), 216-241 (STQVRDEFPKSVSIDTPNLVYLKFTD), 292-323 (TLYLSSNTLQVLTYSCDAIPIFNNLTHLTIES), and 324-349 (NPEVGWQSLPGLLKNSPNLETLIFQG).

The protein is F-box/LRR-repeat protein At4g14096 of Arabidopsis thaliana (Mouse-ear cress).